Consider the following 564-residue polypeptide: Dihydropyrimidinase-related protein 5 (564 aa).

2 positions are modified to phosphothreonine: Thr509 and Thr514. 2 positions are modified to phosphoserine: Ser532 and Ser538. Arg559 is subject to Omega-N-methylarginine.

The protein belongs to the metallo-dependent hydrolases superfamily. Hydantoinase/dihydropyrimidinase family. As to quaternary structure, homotetramer, and heterotetramer with other DPYS-like proteins. Interacts with DPYSL2, DPYSL3 and DPYSL4. Interacts with MAP2 and TUBB3. As to expression, highly expressed in embryonic and early postnatal brain and spinal cord.

It localises to the cytoplasm. Functionally, involved in the negative regulation of dendrite outgrowth. The protein is Dihydropyrimidinase-related protein 5 (Dpysl5) of Rattus norvegicus (Rat).